The following is a 443-amino-acid chain: Threonine/serine transporter TdcC (443 aa).

11 helical membrane passes run 22–42 (TTWT…FFPI), 44–64 (AGFG…PIAF), 97–117 (GVVI…IYGV), 140–160 (VVAL…KDLM), 163–183 (VMSY…LSLI), 207–227 (ILVT…FSPI), 259–279 (ASML…FTLS), 319–339 (ASII…LGTL), 366–386 (LSMV…PNIL), 389–409 (IEAM…MYAI), and 423–443 (DNLF…YKLF).

It belongs to the amino acid/polyamine transporter 2 family. SdaC/TdcC subfamily.

It is found in the cell inner membrane. It carries out the reaction L-threonine(in) + H(+)(in) = L-threonine(out) + H(+)(out). It catalyses the reaction L-serine(in) + H(+)(in) = L-serine(out) + H(+)(out). Functionally, involved in the import of threonine and serine into the cell, with the concomitant import of a proton (symport system). The chain is Threonine/serine transporter TdcC from Klebsiella pneumoniae (strain 342).